Consider the following 212-residue polypeptide: Octanoyltransferase (212 aa).

The BPL/LPL catalytic domain maps to 30–205 (ETTVDELWCL…ELVEGLGHSQ (176 aa)). Residues 69 to 76 (RGGQVTYH), 136 to 138 (SLG), and 149 to 151 (GLA) each bind substrate. Cys167 functions as the Acyl-thioester intermediate in the catalytic mechanism.

This sequence belongs to the LipB family.

It is found in the cytoplasm. The enzyme catalyses octanoyl-[ACP] + L-lysyl-[protein] = N(6)-octanoyl-L-lysyl-[protein] + holo-[ACP] + H(+). The protein operates within protein modification; protein lipoylation via endogenous pathway; protein N(6)-(lipoyl)lysine from octanoyl-[acyl-carrier-protein]: step 1/2. Functionally, catalyzes the transfer of endogenously produced octanoic acid from octanoyl-acyl-carrier-protein onto the lipoyl domains of lipoate-dependent enzymes. Lipoyl-ACP can also act as a substrate although octanoyl-ACP is likely to be the physiological substrate. This is Octanoyltransferase from Marinobacter nauticus (strain ATCC 700491 / DSM 11845 / VT8) (Marinobacter aquaeolei).